The following is a 364-amino-acid chain: Probable dual-specificity RNA methyltransferase RlmN (364 aa).

Glutamate 107 (proton acceptor) is an active-site residue. The Radical SAM core domain occupies 113–346; that stretch reads HDYGNSVCVT…ATIRREQGSD (234 aa). A disulfide bridge connects residues cysteine 120 and cysteine 351. [4Fe-4S] cluster-binding residues include cysteine 127, cysteine 131, and cysteine 134. S-adenosyl-L-methionine contacts are provided by residues 177–178, serine 209, 232–234, and asparagine 308; these read GE and SLH. The S-methylcysteine intermediate role is filled by cysteine 351.

The protein belongs to the radical SAM superfamily. RlmN family. [4Fe-4S] cluster is required as a cofactor.

The protein resides in the cytoplasm. It catalyses the reaction adenosine(2503) in 23S rRNA + 2 reduced [2Fe-2S]-[ferredoxin] + 2 S-adenosyl-L-methionine = 2-methyladenosine(2503) in 23S rRNA + 5'-deoxyadenosine + L-methionine + 2 oxidized [2Fe-2S]-[ferredoxin] + S-adenosyl-L-homocysteine. The catalysed reaction is adenosine(37) in tRNA + 2 reduced [2Fe-2S]-[ferredoxin] + 2 S-adenosyl-L-methionine = 2-methyladenosine(37) in tRNA + 5'-deoxyadenosine + L-methionine + 2 oxidized [2Fe-2S]-[ferredoxin] + S-adenosyl-L-homocysteine. In terms of biological role, specifically methylates position 2 of adenine 2503 in 23S rRNA and position 2 of adenine 37 in tRNAs. Confers resistance to some classes of antibiotics. In Staphylococcus haemolyticus (strain JCSC1435), this protein is Probable dual-specificity RNA methyltransferase RlmN.